The following is a 257-amino-acid chain: Alkaline phosphatase synthesis transcriptional regulatory protein SphR (257 aa).

The Response regulatory domain occupies 25-148; sequence RILVVEDEAV…ELVARCRALL (124 aa). At Asp-83 the chain carries 4-aspartylphosphate. The ompR/PhoB-type DNA-binding region spans 159–257; that stretch reads PAVLRYEGLK…TVRGFGYRLG (99 aa).

In terms of processing, phosphorylated by SphS.

Its function is as follows. Member of the two-component regulatory system SphR/SphS. Response regulator. Involved in inducible production of alkaline phosphatase in response to phosphate limitation as it is directly involved in the regulation of phoA transcription in response to phosphate limitation. Binds to two distinct sites upstream from the phoA promoter. This Synechococcus elongatus (strain ATCC 33912 / PCC 7942 / FACHB-805) (Anacystis nidulans R2) protein is Alkaline phosphatase synthesis transcriptional regulatory protein SphR (sphR).